The primary structure comprises 333 residues: Glycogenin-1 (333 aa).

T2 is modified (N-acetylthreonine). UDP contacts are provided by L9, T11, N12, and Y15. Residues L9, T11, N12, and Y15 each coordinate UDP-alpha-D-glucose. Phosphoserine is present on S44. R77 contacts UDP. The UDP-alpha-D-glucose site is built by R77, K86, D102, A103, D104, N133, S134, D160, D163, and Q164. Residues D102, A103, and D104 each coordinate UDP. D102 serves as a coordination point for Mn(2+). Residue D104 participates in Mn(2+) binding. Y195 is a glycosylation site (O-linked (Glc...) tyrosine). Positions 212, 215, and 218 each coordinate UDP. A Mn(2+)-binding site is contributed by H212. UDP-alpha-D-glucose is bound by residues G215 and K218. The interval 284 to 316 (SDLSFGEAPAAPQPSMSSEERKERWEQGQADYM) is interaction with GYS1. The tract at residues 290–316 (EAPAAPQPSMSSEERKERWEQGQADYM) is disordered.

The protein belongs to the glycosyltransferase 8 family. Glycogenin subfamily. In terms of assembly, part of the GYS1-GYG1 complex, a heterooctamer composed of a tetramer of GYS1 and 2 dimers of GYG1, where each GYS1 protomer binds to one GYG1 subunit (via GYG1 C-terminus); the GYS1 tetramer may dissociate from GYG1 dimers to continue glycogen polymerization on its own. May also form a heterooctamer complex with GYS2. Mn(2+) serves as cofactor. Self-glycosylated by the transfer of glucose residues from UDP-glucose to itself, forming an alpha-1,4-glycan of around 10 residues attached to Tyr-195. In terms of processing, phosphorylated. In terms of tissue distribution, skeletal muscle, heart, to a lesser extent in kidney, lung and brain.

The protein resides in the cytoplasm. It is found in the nucleus. It catalyses the reaction L-tyrosyl-[glycogenin] + UDP-alpha-D-glucose = alpha-D-glucosyl-L-tyrosyl-[glycogenin] + UDP + H(+). It carries out the reaction [1,4-alpha-D-glucosyl](n)-L-tyrosyl-[glycogenin] + UDP-alpha-D-glucose = [1,4-alpha-D-glucosyl](n+1)-L-tyrosyl-[glycogenin] + UDP + H(+). It participates in glycan biosynthesis; glycogen biosynthesis. Its function is as follows. Glycogenin participates in the glycogen biosynthetic process along with glycogen synthase and glycogen branching enzyme. It catalyzes the formation of a short alpha (1,4)-glucosyl chain covalently attached via a glucose 1-O-tyrosyl linkage to internal tyrosine residues and these chains act as primers for the elongation reaction catalyzed by glycogen synthase. In Mus musculus (Mouse), this protein is Glycogenin-1.